A 211-amino-acid chain; its full sequence is Putative ATP-dependent Clp protease proteolytic subunit-like (211 aa).

The interval 1–24 (MTRPSARHVLPEFTERTSAGTRTS) is disordered. His129 is an active-site residue.

It belongs to the peptidase S14 family.

Has lost one of the conserved residue (Ser) proposed to be part of the active site. Therefore it could be inactive. This Streptomyces coelicolor (strain ATCC BAA-471 / A3(2) / M145) protein is Putative ATP-dependent Clp protease proteolytic subunit-like.